Reading from the N-terminus, the 324-residue chain is MSTFTPTRNDWQLDEILELFHTAFNDLILQSHLLHRQFFSNNEVQISSLLNIKTGGCPENCKYCSQSAHYKTDLKKESLLDIESIKKAIQTAKKNGADRFCFAAAWRQVRDRDLEYICDIIDLIKSENLESCASLGMVTLEQAKKLKNAGLDFYNHNIDTSRDFYPNVTTTRSYDDRLTSLNNIHEAGINICSGGILGLGESVEDRAKMLLTLANLKEHPLSVPINRLVPIKGTPFENNAKIDNIDFIKTIAVARILMPKSYIRLAAGRMSMSEEMQALCLFAGANSIFYGEKLLTTPNADCNDDRNLLSKLGAKTKEPVFFNS.

A Radical SAM core domain is found at Asn-42–Arg-269. Cys-57, Cys-61, and Cys-64 together coordinate [4Fe-4S] cluster. 4 residues coordinate [2Fe-2S] cluster: Cys-101, Cys-132, Cys-192, and Arg-264.

The protein belongs to the radical SAM superfamily. Biotin synthase family. As to quaternary structure, homodimer. Requires [4Fe-4S] cluster as cofactor. [2Fe-2S] cluster serves as cofactor.

It catalyses the reaction (4R,5S)-dethiobiotin + (sulfur carrier)-SH + 2 reduced [2Fe-2S]-[ferredoxin] + 2 S-adenosyl-L-methionine = (sulfur carrier)-H + biotin + 2 5'-deoxyadenosine + 2 L-methionine + 2 oxidized [2Fe-2S]-[ferredoxin]. It functions in the pathway cofactor biosynthesis; biotin biosynthesis; biotin from 7,8-diaminononanoate: step 2/2. In terms of biological role, catalyzes the conversion of dethiobiotin (DTB) to biotin by the insertion of a sulfur atom into dethiobiotin via a radical-based mechanism. The protein is Biotin synthase of Ehrlichia canis (strain Jake).